We begin with the raw amino-acid sequence, 470 residues long: Argininosuccinate lyase (470 aa).

It belongs to the lyase 1 family. Argininosuccinate lyase subfamily.

It localises to the cytoplasm. The enzyme catalyses 2-(N(omega)-L-arginino)succinate = fumarate + L-arginine. It participates in amino-acid biosynthesis; L-arginine biosynthesis; L-arginine from L-ornithine and carbamoyl phosphate: step 3/3. The chain is Argininosuccinate lyase from Mycolicibacterium gilvum (strain PYR-GCK) (Mycobacterium gilvum (strain PYR-GCK)).